The chain runs to 658 residues: Transmembrane 9 superfamily member 11 (658 aa).

The first 23 residues, 1 to 23, serve as a signal peptide directing secretion; the sequence is MRSMDRFGIWVLAILLVIQSSFG. The Lumenal segment spans residues 24–291; the sequence is FYLPGSYPHK…LKMEGSKVHW (268 aa). The chain crosses the membrane as a helical span at residues 292–312; sequence FSILNSLMVITFLAGIVLVIF. At 313–364 the chain is on the cytoplasmic side; sequence LRTVRRDLTRYEELDKEAQAQMNEELSGWKLVVGDVFRAPSNASLLCVMVGD. Residues 365–385 traverse the membrane as a helical segment; the sequence is GVQILGMAVVTILFAALGFMS. Residues 386–391 lie on the Lumenal side of the membrane; sequence PASRGT. A helical transmembrane segment spans residues 392-412; that stretch reads LITGMLFFYMILGIAAGYVSV. At 413 to 432 the chain is on the cytoplasmic side; that stretch reads RLWRTIGCGEHRGWMSVAWK. The chain crosses the membrane as a helical span at residues 433–453; that stretch reads AACFFPGIAFLILTTLNFLLW. Over 454 to 462 the chain is Lumenal; it reads GSHSTGAIP. The helical transmembrane segment at 463-483 threads the bilayer; it reads FSLFVILLLLWFCISVPLTLI. Residues 484 to 515 are Cytoplasmic-facing; it reads GGYFGAKAPHIEFPVRTNQIPREIPAQKYPSW. A helical transmembrane segment spans residues 516-536; that stretch reads LLVLGAGTLPFGTLFIELFFI. At 537–547 the chain is on the lumenal side; it reads MSSIWMGRVYY. The chain crosses the membrane as a helical span at residues 548 to 568; that stretch reads VFGFLFVVLILLVVVCAEVSL. At 569 to 586 the chain is on the cytoplasmic side; the sequence is VLTYMHLCVEDYKWWWKS. A helical transmembrane segment spans residues 587–607; it reads FFASGSVAIYIFIYSINYLVF. The Lumenal segment spans residues 608–619; the sequence is DLKSLSGPVSAT. Residues 620–640 traverse the membrane as a helical segment; that stretch reads LYLGYSLFMVLAIMLATGTVG. The Cytoplasmic portion of the chain corresponds to 641-658; sequence FLSSFWFVHYLFSSVKLD. The Endoplasmic reticulum export signal signature appears at 647-652; the sequence is FVHYLF. The Golgi retention signal signature appears at 656-658; that stretch reads KLD.

This sequence belongs to the nonaspanin (TM9SF) (TC 9.A.2) family.

It is found in the endosome membrane. Its subcellular location is the golgi apparatus membrane. This chain is Transmembrane 9 superfamily member 11, found in Arabidopsis thaliana (Mouse-ear cress).